A 400-amino-acid polypeptide reads, in one-letter code: Argininosuccinate synthase (400 aa).

10 to 18 (AYSGGVDTS) contacts ATP. Tyr-89 is a binding site for L-citrulline. An ATP-binding site is contributed by Gly-119. The L-aspartate site is built by Thr-121, Asn-125, and Asp-126. Asn-125 is an L-citrulline binding site. 5 residues coordinate L-citrulline: Arg-129, Ser-177, Ser-186, Glu-262, and Tyr-274.

It belongs to the argininosuccinate synthase family. Type 1 subfamily. As to quaternary structure, homotetramer.

Its subcellular location is the cytoplasm. The enzyme catalyses L-citrulline + L-aspartate + ATP = 2-(N(omega)-L-arginino)succinate + AMP + diphosphate + H(+). The protein operates within amino-acid biosynthesis; L-arginine biosynthesis; L-arginine from L-ornithine and carbamoyl phosphate: step 2/3. This Synechococcus sp. (strain JA-2-3B'a(2-13)) (Cyanobacteria bacterium Yellowstone B-Prime) protein is Argininosuccinate synthase.